A 532-amino-acid chain; its full sequence is Probable cytochrome c oxidase subunit 1 (532 aa).

The next 8 helical transmembrane spans lie at 33-53 (IMYI…SLLF), 74-94 (VLIT…ALFG), 95-115 (GFGN…FPRL), 118-138 (ISFW…FVDG), 163-183 (MAIF…INLI), 200-220 (PLFV…MPVL), 252-272 (LFWF…FGIV), and 284-304 (IFGY…GFIV). Residue His79 participates in Fe(II)-heme a binding. 2 residues coordinate Cu cation: His258 and Tyr262. Residues His307 and His308 each contribute to the Cu cation site. 2 consecutive transmembrane segments (helical) span residues 318-338 (ALIY…IKIF) and 355-375 (MLFS…GIIL). His393 serves as a coordination point for heme a3. A run of 3 helical transmembrane segments spans residues 394-414 (FHYT…YYWF), 431-451 (FWIT…LGLA), and 473-493 (IGAG…FYTL). His395 lines the Fe(II)-heme a pocket.

Belongs to the heme-copper respiratory oxidase family.

It localises to the cell membrane. It catalyses the reaction 4 Fe(II)-[cytochrome c] + O2 + 8 H(+)(in) = 4 Fe(III)-[cytochrome c] + 2 H2O + 4 H(+)(out). It functions in the pathway energy metabolism; oxidative phosphorylation. Cytochrome c oxidase is the component of the respiratory chain that catalyzes the reduction of oxygen to water. Subunits 1-3 form the functional core of the enzyme complex. CO I is the catalytic subunit of the enzyme. Electrons originating in cytochrome c are transferred via the copper A center of subunit 2 and heme A of subunit 1 to the bimetallic center formed by heme A3 and copper B. This Rickettsia bellii (strain RML369-C) protein is Probable cytochrome c oxidase subunit 1 (ctaD).